Reading from the N-terminus, the 162-residue chain is Large ribosomal subunit protein uL30 (162 aa).

The protein belongs to the universal ribosomal protein uL30 family. In terms of assembly, part of the 50S ribosomal subunit.

The chain is Large ribosomal subunit protein uL30 from Desulfurococcus amylolyticus (strain DSM 18924 / JCM 16383 / VKM B-2413 / 1221n) (Desulfurococcus kamchatkensis).